The chain runs to 279 residues: Formamidopyrimidine-DNA glycosylase (279 aa).

The Schiff-base intermediate with DNA role is filled by P2. E3 functions as the Proton donor in the catalytic mechanism. The active-site Proton donor; for beta-elimination activity is the K58. Positions 92, 111, and 153 each coordinate DNA. Residues 238 to 272 (TVYGKEGQSCLSCSSTIIKTKHSGRSTFYCKTCQY) form an FPG-type zinc finger. The active-site Proton donor; for delta-elimination activity is R262.

Belongs to the FPG family. As to quaternary structure, monomer. Zn(2+) is required as a cofactor.

The catalysed reaction is Hydrolysis of DNA containing ring-opened 7-methylguanine residues, releasing 2,6-diamino-4-hydroxy-5-(N-methyl)formamidopyrimidine.. It catalyses the reaction 2'-deoxyribonucleotide-(2'-deoxyribose 5'-phosphate)-2'-deoxyribonucleotide-DNA = a 3'-end 2'-deoxyribonucleotide-(2,3-dehydro-2,3-deoxyribose 5'-phosphate)-DNA + a 5'-end 5'-phospho-2'-deoxyribonucleoside-DNA + H(+). In terms of biological role, involved in base excision repair of DNA damaged by oxidation or by mutagenic agents. Acts as a DNA glycosylase that recognizes and removes damaged bases. Has a preference for oxidized purines, such as 7,8-dihydro-8-oxoguanine (8-oxoG). Has AP (apurinic/apyrimidinic) lyase activity and introduces nicks in the DNA strand. Cleaves the DNA backbone by beta-delta elimination to generate a single-strand break at the site of the removed base with both 3'- and 5'-phosphates. The chain is Formamidopyrimidine-DNA glycosylase from Rickettsia massiliae (strain Mtu5).